Reading from the N-terminus, the 413-residue chain is Coiled-coil domain-containing protein 83 (413 aa).

Coiled-coil stretches lie at residues 32–186 and 215–255; these read HCQI…RIIR and IWEN…QLFN.

The chain is Coiled-coil domain-containing protein 83 (CCDC83) from Bos taurus (Bovine).